Here is a 260-residue protein sequence, read N- to C-terminus: Coiled-coil domain-containing protein 127 (260 aa).

Residues Glu-47 to Gln-135 are a coiled coil.

This Rattus norvegicus (Rat) protein is Coiled-coil domain-containing protein 127 (Ccdc127).